Consider the following 278-residue polypeptide: Autophagy protein 5 (278 aa).

A disordered region spans residues 1 to 25 (MSSPPASTDHRLVGSTTGAPDTPSA). Residue Lys128 forms a Glycyl lysine isopeptide (Lys-Gly) (interchain with G-Cter in ATG12) linkage.

It belongs to the ATG5 family. In terms of assembly, conjugated with ATG12. In terms of processing, conjugated to ATG12; which is essential for autophagy.

It localises to the preautophagosomal structure membrane. In terms of biological role, involved in cytoplasm to vacuole transport (Cvt) and autophagic vesicle formation. Autophagy is essential for maintenance of amino acid levels and protein synthesis under nitrogen starvation. Required for selective autophagic degradation of the nucleus (nucleophagy). Also required for mitophagy, which eliminates defective or superfluous mitochondria in order to fulfill cellular energy requirements and prevent excess ROS production. Conjugation with ATG12, through a ubiquitin-like conjugating system involving ATG7 as an E1-like activating enzyme and ATG10 as an E2-like conjugating enzyme, is essential for its function. The ATG12-ATG5 conjugate acts as an E3-like enzyme which is required for lipidation of ATG8 and ATG8 association to the vesicle membranes. This is Autophagy protein 5 (ATG5) from Chaetomium globosum (strain ATCC 6205 / CBS 148.51 / DSM 1962 / NBRC 6347 / NRRL 1970) (Soil fungus).